Consider the following 363-residue polypeptide: UDP-N-acetylglucosamine--N-acetylmuramyl-(pentapeptide) pyrophosphoryl-undecaprenol N-acetylglucosamine transferase (363 aa).

Residues 13–15 (TGG), Asn-125, Arg-166, Ser-195, Ile-249, 268–273 (ALTVSE), and Gln-294 each bind UDP-N-acetyl-alpha-D-glucosamine.

The protein belongs to the glycosyltransferase 28 family. MurG subfamily.

It is found in the cell inner membrane. The enzyme catalyses di-trans,octa-cis-undecaprenyl diphospho-N-acetyl-alpha-D-muramoyl-L-alanyl-D-glutamyl-meso-2,6-diaminopimeloyl-D-alanyl-D-alanine + UDP-N-acetyl-alpha-D-glucosamine = di-trans,octa-cis-undecaprenyl diphospho-[N-acetyl-alpha-D-glucosaminyl-(1-&gt;4)]-N-acetyl-alpha-D-muramoyl-L-alanyl-D-glutamyl-meso-2,6-diaminopimeloyl-D-alanyl-D-alanine + UDP + H(+). Its pathway is cell wall biogenesis; peptidoglycan biosynthesis. Its function is as follows. Cell wall formation. Catalyzes the transfer of a GlcNAc subunit on undecaprenyl-pyrophosphoryl-MurNAc-pentapeptide (lipid intermediate I) to form undecaprenyl-pyrophosphoryl-MurNAc-(pentapeptide)GlcNAc (lipid intermediate II). The polypeptide is UDP-N-acetylglucosamine--N-acetylmuramyl-(pentapeptide) pyrophosphoryl-undecaprenol N-acetylglucosamine transferase (Cellvibrio japonicus (strain Ueda107) (Pseudomonas fluorescens subsp. cellulosa)).